The primary structure comprises 363 residues: Peptide chain release factor 1 (363 aa).

N5-methylglutamine is present on Q237. A compositionally biased stretch (basic and acidic residues) spans 284 to 297; it reads ERAKQQSERSEQRR. The interval 284-306 is disordered; that stretch reads ERAKQQSERSEQRRLAVGSGDRS.

This sequence belongs to the prokaryotic/mitochondrial release factor family. Methylated by PrmC. Methylation increases the termination efficiency of RF1.

It localises to the cytoplasm. Peptide chain release factor 1 directs the termination of translation in response to the peptide chain termination codons UAG and UAA. This is Peptide chain release factor 1 from Halorhodospira halophila (strain DSM 244 / SL1) (Ectothiorhodospira halophila (strain DSM 244 / SL1)).